We begin with the raw amino-acid sequence, 438 residues long: Keratin, type I cytoskeletal 18 (438 aa).

The head stretch occupies residues 4–83 (AVSSRSTVVS…TLSGNAVISN (80 aa)). A coil 1A region spans residues 84–119 (EKETMQDLNDRLSNYLETVRRLENANQQLEIQIREA). The region spanning 84–395 (EKETMQDLND…HLLGGEDSDT (312 aa)) is the IF rod domain. The tract at residues 120–136 (MEKRGPSVRDYSNYEKI) is linker 1. Residues 137–228 (IKELRDQIYD…KNHEDEVIAL (92 aa)) are coil 1B. The tract at residues 229–252 (RNQVNSCGVQVDLDAPKGTDLAEI) is linker 12. The segment at 253-393 (MATLRAEYEA…YRHLLGGEDS (141 aa)) is coil 2. Residues 394–438 (DTLSLQDALSAMKVSNVQTVQKIVVTTQKLVDGKVVEDSTVTETK) form a tail region.

It belongs to the intermediate filament family. In terms of assembly, heterotetramer of two type I and two type II keratins. Keratin-18 associates with keratin-8. In terms of processing, phosphorylated. Proteolytically cleaved by caspases during epithelial cell apoptosis. In terms of tissue distribution, expressed at low levels in skin.

In terms of biological role, when phosphorylated, plays a role in filament reorganization. The protein is Keratin, type I cytoskeletal 18 of Protopterus aethiopicus (Marbled lungfish).